The primary structure comprises 257 residues: Pyrroline-5-carboxylate reductase (257 aa).

The protein belongs to the pyrroline-5-carboxylate reductase family.

It is found in the cytoplasm. It catalyses the reaction L-proline + NADP(+) = (S)-1-pyrroline-5-carboxylate + NADPH + 2 H(+). It carries out the reaction L-proline + NAD(+) = (S)-1-pyrroline-5-carboxylate + NADH + 2 H(+). It participates in amino-acid biosynthesis; L-proline biosynthesis; L-proline from L-glutamate 5-semialdehyde: step 1/1. Functionally, catalyzes the reduction of 1-pyrroline-5-carboxylate (PCA) to L-proline. This is Pyrroline-5-carboxylate reductase from Helicobacter pylori (strain ATCC 700392 / 26695) (Campylobacter pylori).